The chain runs to 102 residues: MAALLVRSVVASVVDPFLHLSRLAVKPRVFSSFLLGTLPRAKPCAEVRSVLCGRPLPTLLPSLGFKTKGVIKKRCKDCYKVKRRGRWFILCKTNPKHKQRQM.

It belongs to the bacterial ribosomal protein bL36 family. Component of the mitochondrial ribosome large subunit (39S) which comprises a 16S rRNA and about 50 distinct proteins.

Its subcellular location is the mitochondrion. This is Large ribosomal subunit protein bL36m (Mrpl36) from Mus musculus (Mouse).